Here is a 119-residue protein sequence, read N- to C-terminus: Large ribosomal subunit protein uL14 (119 aa).

This sequence belongs to the universal ribosomal protein uL14 family. As to quaternary structure, part of the 50S ribosomal subunit. Forms a cluster with proteins L3 and L19. In the 70S ribosome, L14 and L19 interact and together make contacts with the 16S rRNA in bridges B5 and B8.

Functionally, binds to 23S rRNA. Forms part of two intersubunit bridges in the 70S ribosome. The chain is Large ribosomal subunit protein uL14 from Neorickettsia sennetsu (strain ATCC VR-367 / Miyayama) (Ehrlichia sennetsu).